An 85-amino-acid polypeptide reads, in one-letter code: Antitoxin VapB4 (85 aa).

It belongs to the phD/YefM antitoxin family. As to quaternary structure, interacts with cognate toxin VapC4.

In terms of biological role, antitoxin component of a type II toxin-antitoxin (TA) system. Antitoxin that counteracts the effect of the VapC4 toxin. The chain is Antitoxin VapB4 (vapB4) from Mycobacterium tuberculosis (strain CDC 1551 / Oshkosh).